The chain runs to 176 residues: ATP-dependent protease subunit HslV (176 aa).

The active site involves Thr-5. Positions 161, 164, and 167 each coordinate Na(+).

The protein belongs to the peptidase T1B family. HslV subfamily. In terms of assembly, a double ring-shaped homohexamer of HslV is capped on each side by a ring-shaped HslU homohexamer. The assembly of the HslU/HslV complex is dependent on binding of ATP.

It is found in the cytoplasm. It catalyses the reaction ATP-dependent cleavage of peptide bonds with broad specificity.. Allosterically activated by HslU binding. Protease subunit of a proteasome-like degradation complex believed to be a general protein degrading machinery. This is ATP-dependent protease subunit HslV from Thermoanaerobacter pseudethanolicus (strain ATCC 33223 / 39E) (Clostridium thermohydrosulfuricum).